The sequence spans 863 residues: Autotaxin (863 aa).

The first 27 residues, 1-27 (MARRSSFQSCQIISLFTFAVGVNICLG), serve as a signal peptide directing secretion. The propeptide at 28–35 (FTAHRIKR) is removed by furin. N54 carries an N-linked (GlcNAc...) asparagine glycan. SMB domains lie at 55–98 (ISGS…LKTA) and 99–143 (RGWE…GESH). 10 cysteine pairs are disulfide-bonded: C59–C76, C63–C94, C74–C87, C80–C86, C103–C120, C108–C138, C118–C131, C124–C130, C149–C195, and C157–C351. The Cell attachment site motif lies at 127–129 (RGD). The interval 145–502 (VDDDCEEIKA…STFKYKTKVP (358 aa)) is phosphodiesterase. 2 residues coordinate Zn(2+): D172 and T210. Residue T210 is the Nucleophile of the active site. 3 residues coordinate 1-(9Z-octadecenoyl)-sn-glycero-3-phosphate: T210, N231, and D312. Residues T210, N231, and D312 each contribute to the 1-hexadecanoyl-sn-glycero-3-phosphate site. Positions 210, 231, and 312 each coordinate 1-tetradecanoyl-sn-glycerol 3-phosphate. Residues D312, H316, D359, and H360 each coordinate Zn(2+). 5 disulfides stabilise this stretch: C367/C469, C414/C806, C567/C667, C569/C652, and C775/C785. The N-linked (GlcNAc...) asparagine glycan is linked to N411. H475 is a Zn(2+) binding site. H475 contacts 1-(9Z-octadecenoyl)-sn-glycero-3-phosphate. 1-hexadecanoyl-sn-glycero-3-phosphate is bound at residue H475. H475 contributes to the 1-tetradecanoyl-sn-glycerol 3-phosphate binding site. N-linked (GlcNAc...) asparagine glycosylation is present at N525. Residues 598 to 863 (LYGRPAVLYR…TYLHTYESEI (266 aa)) form a nuclease-like domain region. 5 residues coordinate Ca(2+): D740, D742, D744, L746, and D748. The N-linked (GlcNAc...) asparagine glycan is linked to N807. The tract at residues 830 to 851 (IEHLTSLDFFRKTSRSYPEILT) is required for secretion.

Belongs to the nucleotide pyrophosphatase/phosphodiesterase family. The cofactor is Zn(2+). Requires Ca(2+) as cofactor. N-glycosylation, but not furin-cleavage, plays a critical role on secretion and on lysoPLD activity. In terms of processing, the interdomain disulfide bond between Cys-414 and Cys-806 is essential for catalytic activity. As to expression, detected in blood plasma (at protein level). Predominantly expressed in brain, placenta, ovary, and small intestine. Expressed in a number of carcinomas such as hepatocellular and prostate carcinoma, neuroblastoma and non-small-cell lung cancer. Expressed in body fluids such as plasma, cerebral spinal fluid (CSF), saliva, follicular and amniotic fluids. Not detected in leukocytes. Isoform 1 is more highly expressed in peripheral tissues than in the central nervous system (CNS). Adipocytes only express isoform 1. Isoform 3 is more highly expressed in the brain than in peripheral tissues.

It is found in the secreted. It carries out the reaction a 1-O-alkyl-sn-glycero-3-phosphoethanolamine + H2O = a 1-O-alkyl-sn-glycero-3-phosphate + ethanolamine + H(+). The enzyme catalyses a 1-acyl-sn-glycero-3-phosphoethanolamine + H2O = a 1-acyl-sn-glycero-3-phosphate + ethanolamine + H(+). It catalyses the reaction 1-(9Z-octadecenoyl)-sn-glycero-3-phosphoethanolamine + H2O = 1-(9Z-octadecenoyl)-sn-glycero-3-phosphate + ethanolamine + H(+). The catalysed reaction is a 1-O-alkyl-sn-glycero-3-phosphocholine + H2O = a 1-O-alkyl-sn-glycero-3-phosphate + choline + H(+). It carries out the reaction 1-O-(9Z-octadecenyl)-sn-glycero-3-phosphocholine + H2O = 1-O-(9Z-octadecenyl)-sn-glycero-3-phosphate + choline + H(+). The enzyme catalyses 1-O-hexadecyl-sn-glycero-3-phosphocholine + H2O = 1-O-hexadecyl-sn-glycero-3-phosphate + choline + H(+). It catalyses the reaction a 1-O-(1Z-alkenyl)-sn-glycero-3-phosphocholine + H2O = a 1-O-(1Z-alkenyl)-sn-glycero-3-phosphate + choline + H(+). The catalysed reaction is a 1-acyl-sn-glycero-3-phosphocholine + H2O = a 1-acyl-sn-glycero-3-phosphate + choline + H(+). It carries out the reaction 1-dodecanoyl-sn-glycero-3-phosphocholine + H2O = 1-dodecanoyl-sn-glycerol 3-phosphate + choline + H(+). The enzyme catalyses 1-(9Z-octadecenoyl)-sn-glycero-3-phosphocholine + H2O = 1-(9Z-octadecenoyl)-sn-glycero-3-phosphate + choline + H(+). It catalyses the reaction 1-tetradecanoyl-sn-glycero-3-phosphocholine + H2O = 1-tetradecanoyl-sn-glycerol 3-phosphate + choline + H(+). The catalysed reaction is 1-decanoyl-sn-glycero-3-phosphocholine + H2O = 1-decanoyl-sn-glycero-3-phosphate + choline + H(+). It carries out the reaction 1-octadecanoyl-sn-glycero-3-phosphocholine + H2O = 1-octadecanoyl-sn-glycero-3-phosphate + choline + H(+). The enzyme catalyses 1-hexadecanoyl-sn-glycero-3-phosphocholine + H2O = 1-hexadecanoyl-sn-glycero-3-phosphate + choline + H(+). It catalyses the reaction 1-hexanoyl-sn-glycero-3-phosphocholine + H2O = 1-hexanoyl-sn-glycero-3-phosphate + choline + H(+). The catalysed reaction is 1-(9Z,12Z)-octadecadienoyl-sn-glycero-3-phosphocholine + H2O = 1-(9Z,12Z)-octadecadienoyl-sn-glycero-3-phosphate + choline + H(+). It carries out the reaction sphing-4-enine-phosphocholine + H2O = sphing-4-enine 1-phosphate + choline + H(+). The enzyme catalyses 1-(5Z,8Z,11Z,14Z-eicosatetraenoyl)-sn-glycero-3-phosphocholine + H2O = 1-(5Z,8Z,11Z,14Z-eicosatetraenoyl)-sn-glycero-3-phosphate + choline + H(+). It catalyses the reaction a 2-acyl-sn-glycero-3-phosphocholine + H2O = a 2-acyl-sn-glycerol 3-phosphate + choline + H(+). The catalysed reaction is a 1,2-diacyl-sn-glycero-3-phosphocholine + H2O = a 1,2-diacyl-sn-glycero-3-phosphate + choline + H(+). It carries out the reaction 1,2-dioctanoyl-sn-glycero-3-phosphocholine + H2O = 1,2-dioctanoyl-sn-glycero-3-phosphate + choline + H(+). The enzyme catalyses 1,2-didecanoyl-sn-glycero-3-phosphocholine + H2O = 1,2-didecanoyl-sn-glycero-3-phosphate + choline + H(+). It catalyses the reaction a 1-acyl-sn-glycero-3-phospho-L-serine + H2O = a 1-acyl-sn-glycero-3-phosphate + L-serine + H(+). The catalysed reaction is 1-(9Z-octadecenoyl)-sn-glycero-3-phospho-L-serine + H2O = 1-(9Z-octadecenoyl)-sn-glycero-3-phosphate + L-serine + H(+). It carries out the reaction a 2-acyl-sn-glycero-3-phospho-L-serine + H2O = a 2-acyl-sn-glycerol 3-phosphate + L-serine + H(+). Inhibited by lysophosphatidic acid (LPA) and sphingosine-1-phosphate (S1P). Inhibited by EDTA and EGTA. Its function is as follows. Secreted lysophospholipase D that hydrolyzes lysophospholipids to produce the signaling molecule lysophosphatidic acid (LPA) in extracellular fluids. Its major substrate is lysophosphatidylcholine. Can also act on sphingosylphosphorylcholine producing sphingosine-1-phosphate, a modulator of cell motility. Can hydrolyze, in vitro, bis-pNPP, to some extent pNP-TMP, and barely ATP. Involved in several motility-related processes such as angiogenesis and neurite outgrowth. Acts as an angiogenic factor by stimulating migration of smooth muscle cells and microtubule formation. Stimulates migration of melanoma cells, probably via a pertussis toxin-sensitive G protein. May have a role in induction of parturition. Possible involvement in cell proliferation and adipose tissue development. Required for LPA production in activated platelets, cleaves the sn-1 lysophospholipids to generate sn-1 lysophosphatidic acids containing predominantly 18:2 and 20:4 fatty acids. Shows a preference for the sn-1 to the sn-2 isomer of 1-O-alkyl-sn-glycero-3-phosphocholine (lyso-PAF). This is Autotaxin from Homo sapiens (Human).